A 487-amino-acid chain; its full sequence is Aspartyl/glutamyl-tRNA(Asn/Gln) amidotransferase subunit B (487 aa).

This sequence belongs to the GatB/GatE family. GatB subfamily. As to quaternary structure, heterotrimer of A, B and C subunits.

It catalyses the reaction L-glutamyl-tRNA(Gln) + L-glutamine + ATP + H2O = L-glutaminyl-tRNA(Gln) + L-glutamate + ADP + phosphate + H(+). The catalysed reaction is L-aspartyl-tRNA(Asn) + L-glutamine + ATP + H2O = L-asparaginyl-tRNA(Asn) + L-glutamate + ADP + phosphate + 2 H(+). In terms of biological role, allows the formation of correctly charged Asn-tRNA(Asn) or Gln-tRNA(Gln) through the transamidation of misacylated Asp-tRNA(Asn) or Glu-tRNA(Gln) in organisms which lack either or both of asparaginyl-tRNA or glutaminyl-tRNA synthetases. The reaction takes place in the presence of glutamine and ATP through an activated phospho-Asp-tRNA(Asn) or phospho-Glu-tRNA(Gln). The protein is Aspartyl/glutamyl-tRNA(Asn/Gln) amidotransferase subunit B of Roseiflexus sp. (strain RS-1).